We begin with the raw amino-acid sequence, 227 residues long: UPF0173 metal-dependent hydrolase YtkL (227 aa).

This sequence belongs to the UPF0173 family.

The chain is UPF0173 metal-dependent hydrolase YtkL (ytkL) from Bacillus subtilis (strain 168).